Here is a 618-residue protein sequence, read N- to C-terminus: DNA mismatch repair protein MutL (618 aa).

Over residues 367–381 the composition is skewed to low complexity; sequence EPTAAREPATPRYSG. Residues 367–402 form a disordered region; that stretch reads EPTAAREPATPRYSGGASGGNGGRQSAGGWPHAQPG. The span at 382-392 shows a compositional bias: gly residues; it reads GASGGNGGRQS.

This sequence belongs to the DNA mismatch repair MutL/HexB family.

This protein is involved in the repair of mismatches in DNA. It is required for dam-dependent methyl-directed DNA mismatch repair. May act as a 'molecular matchmaker', a protein that promotes the formation of a stable complex between two or more DNA-binding proteins in an ATP-dependent manner without itself being part of a final effector complex. The polypeptide is DNA mismatch repair protein MutL (Salmonella dublin (strain CT_02021853)).